The following is a 103-amino-acid chain: 6-pyruvoyl tetrahydrobiopterin synthase (103 aa).

A1 carries the post-translational modification N-acetylalanine. H27 serves as a coordination point for Zn(2+). Active-site charge relay system residues include H53 and E92.

This sequence belongs to the PTPS family. In terms of assembly, homohexamer formed of two homotrimers in a head to head fashion. Requires Zn(2+) as cofactor.

It catalyses the reaction 7,8-dihydroneopterin 3'-triphosphate = 6-pyruvoyl-5,6,7,8-tetrahydropterin + triphosphate + H(+). Its pathway is cofactor biosynthesis; tetrahydrobiopterin biosynthesis; tetrahydrobiopterin from 7,8-dihydroneopterin triphosphate: step 1/3. Functionally, involved in the biosynthesis of tetrahydrobiopterin, an essential cofactor of aromatic amino acid hydroxylases. Catalyzes the transformation of 7,8-dihydroneopterin triphosphate into 6-pyruvoyl tetrahydropterin. This is 6-pyruvoyl tetrahydrobiopterin synthase (pts) from Salmo salar (Atlantic salmon).